We begin with the raw amino-acid sequence, 505 residues long: Xylose import ATP-binding protein XylG (505 aa).

ABC transporter domains are found at residues 6-243 and 262-505; these read LEMR…VGRE and VKNY…TGGK. Position 38–45 (38–45) interacts with ATP; sequence GENGAGKS.

This sequence belongs to the ABC transporter superfamily. Xylose importer (TC 3.A.1.2.4) family. In terms of assembly, the complex is composed of two ATP-binding proteins (XylG), two transmembrane proteins (XylH) and a solute-binding protein (XylF).

It localises to the cell membrane. The enzyme catalyses D-xylose(out) + ATP + H2O = D-xylose(in) + ADP + phosphate + H(+). Functionally, part of the ABC transporter complex XylFGH involved in xylose import. Responsible for energy coupling to the transport system. This Thermoanaerobacter pseudethanolicus (strain ATCC 33223 / 39E) (Clostridium thermohydrosulfuricum) protein is Xylose import ATP-binding protein XylG.